A 235-amino-acid chain; its full sequence is Probable 2-phosphosulfolactate phosphatase (235 aa).

It belongs to the ComB family. Requires Mg(2+) as cofactor.

It carries out the reaction (2R)-O-phospho-3-sulfolactate + H2O = (2R)-3-sulfolactate + phosphate. This is Probable 2-phosphosulfolactate phosphatase from Clostridium novyi (strain NT).